The primary structure comprises 367 residues: Cyclin-dependent kinase 5 activator 2 (367 aa).

Residues 1 to 11 show a composition bias toward polar residues; that stretch reads MGTVLSLSPAS. Disordered regions lie at residues 1 to 56, 72 to 98, 131 to 175, and 329 to 367; these read MGTV…RLKR, ASAK…LVQQ, AAAT…GSPR, and GEAA…NLDR. A lipid anchor (N-myristoyl glycine) is attached at Gly2. The span at 74 to 84 shows a compositional bias: basic residues; sequence AKKKKGSKKVT. Thr84 carries the post-translational modification Phosphothreonine. The span at 131 to 148 shows a compositional bias: low complexity; that stretch reads AAATCEPPSGGSAAAQPP. Over residues 154–171 the composition is skewed to pro residues; the sequence is KPPPPPPPAPQVAPPVPG. The span at 342-357 shows a compositional bias: low complexity; sequence GAPAASSAARDSCAAG.

It belongs to the cyclin-dependent kinase 5 activator family. Heterodimer of a catalytic subunit and a regulatory subunit. Post-translationally, myristoylated. The Gly-2-Ala mutant is absent of the cell periphery, suggesting that a proper myristoylation signal is essential for the proper distribution of CDK5R2 (p39). As to expression, brain and neuron specific.

The protein localises to the cell membrane. Its function is as follows. Activator of CDK5/TPKII. This chain is Cyclin-dependent kinase 5 activator 2 (CDK5R2), found in Homo sapiens (Human).